The chain runs to 327 residues: DNA-directed RNA polymerase subunit alpha (327 aa).

Positions 1–233 (MVREKVKVST…NLFIPFLHVE (233 aa)) are alpha N-terminal domain (alpha-NTD). The interval 265 to 327 (KELAFQYIFI…KKILDILEKK (63 aa)) is alpha C-terminal domain (alpha-CTD).

It belongs to the RNA polymerase alpha chain family. In terms of assembly, in plastids the minimal PEP RNA polymerase catalytic core is composed of four subunits: alpha, beta, beta', and beta''. When a (nuclear-encoded) sigma factor is associated with the core the holoenzyme is formed, which can initiate transcription.

It is found in the plastid. The protein resides in the chloroplast. The catalysed reaction is RNA(n) + a ribonucleoside 5'-triphosphate = RNA(n+1) + diphosphate. In terms of biological role, DNA-dependent RNA polymerase catalyzes the transcription of DNA into RNA using the four ribonucleoside triphosphates as substrates. This is DNA-directed RNA polymerase subunit alpha from Olimarabidopsis pumila (Dwarf rocket).